A 358-amino-acid polypeptide reads, in one-letter code: Probable (S)-tetrahydroprotoberberine N-methyltransferase 2 (358 aa).

S-adenosyl-L-methionine contacts are provided by S98, G136, N160, Q164, D186, V187, and I202. C333 is an active-site residue.

This sequence belongs to the CFA/CMAS family. Homodimer.

The protein localises to the cytoplasm. The catalysed reaction is (S)-stylopine + S-adenosyl-L-methionine = (S)-cis-N-methylstylopine + S-adenosyl-L-homocysteine. It catalyses the reaction (S)-tetrahydropalmatine + S-adenosyl-L-methionine = (S)-cis-N-methyltetrahydropalmatine + S-adenosyl-L-homocysteine. Its pathway is alkaloid biosynthesis. Its function is as follows. N-methyltransferase with a strict substrate specificity for (R,S)-tetrahydropalmatine or (R,S)-stylopine. The polypeptide is Probable (S)-tetrahydroprotoberberine N-methyltransferase 2 (Papaver bracteatum (Great scarlet poppy)).